Reading from the N-terminus, the 403-residue chain is Ribosomal RNA large subunit methyltransferase I (403 aa).

One can recognise a PUA domain in the interval 9–88; it reads YPRLVLSKGR…ESIDIAFFTR (80 aa).

Belongs to the methyltransferase superfamily. RlmI family.

The protein resides in the cytoplasm. The catalysed reaction is cytidine(1962) in 23S rRNA + S-adenosyl-L-methionine = 5-methylcytidine(1962) in 23S rRNA + S-adenosyl-L-homocysteine + H(+). In terms of biological role, specifically methylates the cytosine at position 1962 (m5C1962) of 23S rRNA. The sequence is that of Ribosomal RNA large subunit methyltransferase I from Salmonella typhi.